The sequence spans 361 residues: Cyclin-D3-3 (361 aa).

The protein belongs to the cyclin family. Cyclin D subfamily.

Promotes divisions in the guard cells (GCs) after the guard mother cells (GMC) symmetric division. This chain is Cyclin-D3-3 (CYCD3-3), found in Arabidopsis thaliana (Mouse-ear cress).